The primary structure comprises 90 residues: UPF0213 protein lmo0166 (90 aa).

The region spanning 5 to 80 (SEHFFYVLKC…KKLSRKNKDA (76 aa)) is the GIY-YIG domain.

It belongs to the UPF0213 family.

This Listeria monocytogenes serovar 1/2a (strain ATCC BAA-679 / EGD-e) protein is UPF0213 protein lmo0166.